A 91-amino-acid polypeptide reads, in one-letter code: UPF0386 protein Caul_4643 (91 aa).

This sequence belongs to the UPF0386 family.

The chain is UPF0386 protein Caul_4643 from Caulobacter sp. (strain K31).